The sequence spans 207 residues: Guanylate kinase (207 aa).

Positions 4-184 (GTLYIVSAPS…ALSDLKTIIR (181 aa)) constitute a Guanylate kinase-like domain. Position 11–18 (11–18 (APSGAGKS)) interacts with ATP.

It belongs to the guanylate kinase family.

The protein resides in the cytoplasm. The enzyme catalyses GMP + ATP = GDP + ADP. In terms of biological role, essential for recycling GMP and indirectly, cGMP. The chain is Guanylate kinase from Salmonella paratyphi A (strain ATCC 9150 / SARB42).